Here is a 267-residue protein sequence, read N- to C-terminus: Myxobacterial hemagglutinin (267 aa).

Tandem repeats lie at residues M1 to S66, S67 to T133, D134 to T200, and S201 to G267. Positions M1–G267 are 4 X 65 AA tandem repeats.

This sequence belongs to the bacterial lectin family.

Functionally, this lectin might have a role in the differentiation of cells. In Myxococcus xanthus, this protein is Myxobacterial hemagglutinin (mbhA).